The following is a 915-amino-acid chain: Isoleucine--tRNA ligase (915 aa).

Positions P58 to H68 match the 'HIGH' region motif. E568 lines the L-isoleucyl-5'-AMP pocket. Positions K609–S613 match the 'KMSKS' region motif. K612 is an ATP binding site. Zn(2+) contacts are provided by C892, C895, C907, and C910.

Belongs to the class-I aminoacyl-tRNA synthetase family. IleS type 1 subfamily. Monomer. Zn(2+) is required as a cofactor.

It is found in the cytoplasm. It catalyses the reaction tRNA(Ile) + L-isoleucine + ATP = L-isoleucyl-tRNA(Ile) + AMP + diphosphate. Catalyzes the attachment of isoleucine to tRNA(Ile). As IleRS can inadvertently accommodate and process structurally similar amino acids such as valine, to avoid such errors it has two additional distinct tRNA(Ile)-dependent editing activities. One activity is designated as 'pretransfer' editing and involves the hydrolysis of activated Val-AMP. The other activity is designated 'posttransfer' editing and involves deacylation of mischarged Val-tRNA(Ile). The protein is Isoleucine--tRNA ligase of Wolinella succinogenes (strain ATCC 29543 / DSM 1740 / CCUG 13145 / JCM 31913 / LMG 7466 / NCTC 11488 / FDC 602W) (Vibrio succinogenes).